The sequence spans 1173 residues: Fas-binding factor 1 (1173 aa).

Positions 17-168 (MALRTKKGLK…PSSSKTGLQY (152 aa)) are disordered. Basic and acidic residues predominate over residues 46 to 56 (KPAEPASHAKD). Over residues 80–93 (AGADAEASSVSDAD) the composition is skewed to low complexity. A Phosphoserine modification is found at Ser-172. Disordered stretches follow at residues 180-225 (LAGL…GDTP) and 241-566 (TTLG…SSRE). The segment covering 206-216 (SPGAAAGQGPS) has biased composition (low complexity). Basic and acidic residues-rich tracts occupy residues 247–258 (DSPKAERKKTGD) and 287–299 (TGER…DKKY). Composition is skewed to polar residues over residues 331-345 (VASS…QSVS), 396-411 (SPVQ…MTPS), 468-477 (VISQKKSQNL), and 533-544 (TGSSMSWSQATT). Coiled-coil stretches lie at residues 617–742 (TAQL…QQAS), 808–917 (QQRE…MNKC), and 975–1057 (CELR…VQRQ). Residue Lys-1002 forms a Glycyl lysine isopeptide (Lys-Gly) (interchain with G-Cter in SUMO2) linkage. The segment at 1091–1124 (ASLPGLPPRVQGPAASSRDAVQAPASSSPQCSQP) is disordered. Positions 1110–1124 (AVQAPASSSPQCSQP) are enriched in low complexity.

In terms of assembly, interacts with PARD3. May interact with FAS cytoplasmic domain. Interacts with TRAPPC14. As to expression, broadly expressed.

The protein resides in the cytoplasm. The protein localises to the cytoskeleton. It is found in the microtubule organizing center. Its subcellular location is the centrosome. It localises to the centriole. The protein resides in the spindle pole. The protein localises to the cell junction. Its function is as follows. Keratin-binding protein required for epithelial cell polarization. Involved in apical junction complex (AJC) assembly via its interaction with PARD3. Required for ciliogenesis. The chain is Fas-binding factor 1 (Fbf1) from Mus musculus (Mouse).